We begin with the raw amino-acid sequence, 595 residues long: L-allo-isoleucine:holo-[CmaA peptidyl-carrier protein] ligase (595 aa).

Residues 507 to 582 (VVSPQAGSAV…EWVQYYATHA (76 aa)) enclose the Carrier domain. Serine 542 carries the post-translational modification O-(pantetheine 4'-phosphoryl)serine.

It belongs to the ATP-dependent AMP-binding enzyme family. Homodimer. It depends on pantetheine 4'-phosphate as a cofactor.

It catalyses the reaction L-alloisoleucine + holo-[CmaA peptidyl-carrier protein] + ATP = L-alloisoleucyl-[CmaA peptidyl-carrier protein] + AMP + diphosphate. Involved in the biosynthesis of the phytotoxin coronatine (COR) which mimics the plant hormone jasmonic acid isoleucine and promotes opening of stomata for bacterial entry, bacterial growth in the apoplast, systemic susceptibility, and disease symptoms. CmaA catalyzes the adenylation of L-allo-isoleucine (via the A domain) and the attachment of L-allo-isoleucine to the 4'-phosphopantetheine arm located within the T domain of CmaA. It can also use L-isoleucine, L-leucine and L-valine as substrates. The polypeptide is L-allo-isoleucine:holo-[CmaA peptidyl-carrier protein] ligase (Pseudomonas savastanoi pv. glycinea (Pseudomonas syringae pv. glycinea)).